We begin with the raw amino-acid sequence, 215 residues long: Imidazole glycerol phosphate synthase subunit HisH (215 aa).

The 207-residue stretch at 9–215 (EVVLVDYGLG…QNFVDYCLER (207 aa)) folds into the Glutamine amidotransferase type-1 domain. The active-site Nucleophile is the C85. Residues H193 and E195 contribute to the active site.

As to quaternary structure, heterodimer of HisH and HisF.

The protein localises to the cytoplasm. The catalysed reaction is 5-[(5-phospho-1-deoxy-D-ribulos-1-ylimino)methylamino]-1-(5-phospho-beta-D-ribosyl)imidazole-4-carboxamide + L-glutamine = D-erythro-1-(imidazol-4-yl)glycerol 3-phosphate + 5-amino-1-(5-phospho-beta-D-ribosyl)imidazole-4-carboxamide + L-glutamate + H(+). It catalyses the reaction L-glutamine + H2O = L-glutamate + NH4(+). It participates in amino-acid biosynthesis; L-histidine biosynthesis; L-histidine from 5-phospho-alpha-D-ribose 1-diphosphate: step 5/9. Functionally, IGPS catalyzes the conversion of PRFAR and glutamine to IGP, AICAR and glutamate. The HisH subunit catalyzes the hydrolysis of glutamine to glutamate and ammonia as part of the synthesis of IGP and AICAR. The resulting ammonia molecule is channeled to the active site of HisF. The polypeptide is Imidazole glycerol phosphate synthase subunit HisH (Natronomonas pharaonis (strain ATCC 35678 / DSM 2160 / CIP 103997 / JCM 8858 / NBRC 14720 / NCIMB 2260 / Gabara) (Halobacterium pharaonis)).